Here is a 61-residue protein sequence, read N- to C-terminus: Small ribosomal subunit protein uS14 (61 aa).

Zn(2+) contacts are provided by C24, C27, C40, and C43.

It belongs to the universal ribosomal protein uS14 family. Zinc-binding uS14 subfamily. Part of the 30S ribosomal subunit. Contacts proteins S3 and S10. Requires Zn(2+) as cofactor.

Functionally, binds 16S rRNA, required for the assembly of 30S particles and may also be responsible for determining the conformation of the 16S rRNA at the A site. This chain is Small ribosomal subunit protein uS14, found in Clostridium novyi (strain NT).